Reading from the N-terminus, the 563-residue chain is Tripeptidyl-peptidase 1 (563 aa).

A signal peptide spans 1–19 (MGPRSGLLGLFALFVAGKC). The propeptide at 20-195 (SYSPEPDQQR…PEPQVPGTVG (176 aa)) is removed in mature form. A disulfide bridge links C111 with C122. Residues 199-563 (GVTPSVIRKR…PALLKTLMNP (365 aa)) enclose the Peptidase S53 domain. 2 N-linked (GlcNAc...) asparagine glycosylation sites follow: N210 and N222. Active-site charge relay system residues include E272 and D276. N-linked (GlcNAc...) asparagine glycosylation is found at N286, N313, and N443. Cystine bridges form between C365–C526 and C522–C537. S475 (charge relay system) is an active-site residue. Residues D517 and V518 each coordinate Ca(2+). 3 residues coordinate Ca(2+): G539, G541, and D543.

As to quaternary structure, monomer. Interacts with CLN5. Interacts with CLN3. It depends on Ca(2+) as a cofactor. Post-translationally, activated by autocatalytic proteolytical processing upon acidification. N-glycosylation is required for processing and activity.

Its subcellular location is the lysosome. It is found in the melanosome. It catalyses the reaction Release of an N-terminal tripeptide from a polypeptide, but also has endopeptidase activity.. In terms of biological role, lysosomal serine protease with tripeptidyl-peptidase I activity. May act as a non-specific lysosomal peptidase which generates tripeptides from the breakdown products produced by lysosomal proteinases. Requires substrates with an unsubstituted N-terminus. The polypeptide is Tripeptidyl-peptidase 1 (TPP1) (Bos taurus (Bovine)).